An 83-amino-acid chain; its full sequence is Cytochrome b559 subunit alpha (83 aa).

Residues 21 to 35 (VIHSITIPSLFIAGW) form a helical membrane-spanning segment. His23 contacts heme.

Belongs to the PsbE/PsbF family. As to quaternary structure, heterodimer of an alpha subunit and a beta subunit. PSII is composed of 1 copy each of membrane proteins PsbA, PsbB, PsbC, PsbD, PsbE, PsbF, PsbH, PsbI, PsbJ, PsbK, PsbL, PsbM, PsbT, PsbX, PsbY, PsbZ, Psb30/Ycf12, at least 3 peripheral proteins of the oxygen-evolving complex and a large number of cofactors. It forms dimeric complexes. The cofactor is heme b.

The protein localises to the plastid. Its subcellular location is the chloroplast thylakoid membrane. This b-type cytochrome is tightly associated with the reaction center of photosystem II (PSII). PSII is a light-driven water:plastoquinone oxidoreductase that uses light energy to abstract electrons from H(2)O, generating O(2) and a proton gradient subsequently used for ATP formation. It consists of a core antenna complex that captures photons, and an electron transfer chain that converts photonic excitation into a charge separation. In Zygnema circumcarinatum (Green alga), this protein is Cytochrome b559 subunit alpha.